The primary structure comprises 34 residues: Dermaseptin-H5 (34 aa).

Expressed by the skin glands.

The protein localises to the secreted. Has antimicrobial activity. This Pithecopus hypochondrialis (Orange-legged leaf frog) protein is Dermaseptin-H5.